The sequence spans 91 residues: Cell division protein FtsB (91 aa).

The Cytoplasmic segment spans residues 1-3; sequence MRW. A helical membrane pass occupies residues 4 to 21; it reads PVIILAVLVVVLQYPLWL. Residues 22–91 are Periplasmic-facing; sequence GKGGWLRVWE…EIFVQVPQKH (70 aa). Positions 28–72 form a coiled coil; that stretch reads RVWEVDRKLHEQREENTRLEERNAGLDAEVRDLKSGNEAIEERAR.

This sequence belongs to the FtsB family. Part of a complex composed of FtsB, FtsL and FtsQ.

It localises to the cell inner membrane. Essential cell division protein. May link together the upstream cell division proteins, which are predominantly cytoplasmic, with the downstream cell division proteins, which are predominantly periplasmic. In Azoarcus sp. (strain BH72), this protein is Cell division protein FtsB.